We begin with the raw amino-acid sequence, 236 residues long: Small ribosomal subunit protein eS6 (236 aa).

Phosphoserine is present on residues S232 and S233.

Belongs to the eukaryotic ribosomal protein eS6 family. Phosphorylated.

This Candida glabrata (strain ATCC 2001 / BCRC 20586 / JCM 3761 / NBRC 0622 / NRRL Y-65 / CBS 138) (Yeast) protein is Small ribosomal subunit protein eS6 (RPS6A).